The sequence spans 674 residues: Xaa-Pro aminopeptidase 2 (674 aa).

Residues 1-22 (MAQAYWQCYPWLVLLCACAWSY) form the signal peptide. N-linked (GlcNAc...) asparagine glycosylation occurs at Asn-65. Position 116 (Arg-116) interacts with substrate. 2 N-linked (GlcNAc...) asparagine glycosylation sites follow: Asn-278 and Asn-293. Residue His-430 participates in substrate binding. Residues Asp-450, Asp-461, and His-524 each coordinate Zn(2+). Substrate contacts are provided by His-524, His-533, and Glu-555. 2 residues coordinate Zn(2+): Glu-555 and Glu-569. A lipid anchor (GPI-anchor amidated alanine) is attached at Ala-650. The propeptide at 651-674 (SAPHTTSLASMWVASALAILSWSC) is removed in mature form.

This sequence belongs to the peptidase M24B family. Homotrimer. Zn(2+) serves as cofactor. Post-translationally, N-glycosylated. Expressed strongly in lung, liver and heart, and at lower levels in kidney, testis, brain, spleen and skeletal muscle.

Its subcellular location is the cell membrane. The enzyme catalyses Release of any N-terminal amino acid, including proline, that is linked to proline, even from a dipeptide or tripeptide.. With respect to regulation, inhibited by the chelating agents 1,10-phenanthroline and EDTA. Inhibited by the thiol-containing compounds 2-mercaptoethanol and dithiothreitol. Also inhibited by apstatin, captopril and p-(ch1oromercuri)benzenesulfonic acid. Weakly inhibited by D,L-2-mercaptomethyl-3-guanidinoethylthiopropanoic acid and N-[l-(R,S)-carboxy-(2-phenylethyl)]-Ala-Ala-Phe-p-aminobenzoate. Inhibited by ramiprilat and enalaprilat, in a Mn(2+)-dependent manner. Metal ions have a complex substrate- and concentration-dependent effect on activity. Activity towards Arg-Pro-Pro and Gly-Pro-Hyp is stimulated by Mn(2+) ion concentrations of 10-100 uM and then inhibited at Mn(2+) concentrations of 1-2 mM. Mn(2+) concentrations in excess of 2 mM stimulate activity towards Gly-Pro-Hyp but inhibit activity towards Arg-Pro-Pro. Zn(2+) and Co(2+) ions also inhibit activity towards Arg-Pro-Pro at high concentrations. Activity towards bradykinin is inhibited by Mn(2+) concentrations in excess of 1 mM. In terms of biological role, membrane-bound metalloprotease which catalyzes the removal of a penultimate prolyl residue from the N-termini of peptides, such as Arg-Pro-Pro. May play a role in the metabolism of the vasodilator bradykinin. The protein is Xaa-Pro aminopeptidase 2 of Rattus norvegicus (Rat).